The following is a 218-amino-acid chain: tRNA (guanine-N(7)-)-methyltransferase (218 aa).

A disordered region spans residues 1–25; that stretch reads MRLKNKPWANELVEEHPESALDRPN. Positions 13–25 are enriched in basic and acidic residues; sequence VEEHPESALDRPN. Residues Glu-45, Glu-70, Asp-97, and Asp-119 each contribute to the S-adenosyl-L-methionine site. Asp-119 is a catalytic residue. Lys-123 serves as a coordination point for substrate. Positions 125-130 are interaction with RNA; it reads RHEKRR. Residues Asp-155 and 195–198 contribute to the substrate site; that span reads TEYE.

It belongs to the class I-like SAM-binding methyltransferase superfamily. TrmB family.

The catalysed reaction is guanosine(46) in tRNA + S-adenosyl-L-methionine = N(7)-methylguanosine(46) in tRNA + S-adenosyl-L-homocysteine. The protein operates within tRNA modification; N(7)-methylguanine-tRNA biosynthesis. Functionally, catalyzes the formation of N(7)-methylguanine at position 46 (m7G46) in tRNA. The protein is tRNA (guanine-N(7)-)-methyltransferase of Lactobacillus delbrueckii subsp. bulgaricus (strain ATCC BAA-365 / Lb-18).